Reading from the N-terminus, the 336-residue chain is Speedy protein E1 (336 aa).

The tract at residues 16 to 50 (GVDPSPPCRSLGWKRKREWSDESEEEPEKELAPEP) is disordered. The segment covering 36–50 (DESEEEPEKELAPEP) has biased composition (acidic residues).

The protein belongs to the Speedy/Ringo family. As to expression, predominantly expressed in testis and heart.

The polypeptide is Speedy protein E1 (Homo sapiens (Human)).